Reading from the N-terminus, the 427-residue chain is Acetyl-CoA acetyltransferase, mitochondrial (427 aa).

The transit peptide at 1–33 (MAVLAALLRSGARSRSPLLRRLVQEIRYVERSY) directs the protein to the mitochondrion. Lys-66 is subject to N6-acetyllysine; alternate. Lys-66 is subject to N6-succinyllysine; alternate. Lys-78 carries the post-translational modification N6-succinyllysine. Residue Cys-126 is the Acyl-thioester intermediate of the active site. Lys-174, Lys-181, Lys-190, and Lys-202 each carry N6-acetyllysine; alternate. Residues Lys-174, Lys-181, Lys-190, and Lys-202 each carry the N6-succinyllysine; alternate modification. CoA is bound at residue Tyr-219. Tyr-219 contacts K(+). N6-acetyllysine; alternate is present on residues Lys-223 and Lys-230. 2 positions are modified to N6-succinyllysine; alternate: Lys-223 and Lys-230. Lys-243 bears the N6-succinyllysine mark. 2 positions are modified to N6-acetyllysine: Lys-251 and Lys-257. CoA-binding positions include 258 to 260 (RVD) and Lys-263. Position 263 is an N6-acetyllysine; alternate (Lys-263). Residue Lys-263 is modified to N6-succinyllysine; alternate. An N6-succinyllysine mark is found at Lys-266 and Lys-268. Lys-273 is subject to N6-acetyllysine. Positions 280, 281, and 283 each coordinate K(+). A CoA-binding site is contributed by Ser-284. Position 338 is an N6-acetyllysine (Lys-338). Residue Val-381 coordinates K(+). The active-site Proton donor/acceptor is the Cys-413.

This sequence belongs to the thiolase-like superfamily. Thiolase family. In terms of assembly, homotetramer. Succinylation at Lys-268, adjacent to a coenzyme A binding site. Desuccinylated by SIRT5.

It is found in the mitochondrion. It catalyses the reaction 2 acetyl-CoA = acetoacetyl-CoA + CoA. The catalysed reaction is propanoyl-CoA + acetyl-CoA = 2-methyl-3-oxobutanoyl-CoA + CoA. It participates in lipid metabolism; fatty acid beta-oxidation. Activated by potassium ions, but not sodium ions. Functionally, this is one of the enzymes that catalyzes the last step of the mitochondrial beta-oxidation pathway, an aerobic process breaking down fatty acids into acetyl-CoA. Using free coenzyme A/CoA, catalyzes the thiolytic cleavage of medium- to long-chain 3-oxoacyl-CoAs into acetyl-CoA and a fatty acyl-CoA shortened by two carbon atoms. The activity of the enzyme is reversible and it can also catalyze the condensation of two acetyl-CoA molecules into acetoacetyl-CoA. Thereby, it plays a major role in ketone body metabolism. This Homo sapiens (Human) protein is Acetyl-CoA acetyltransferase, mitochondrial (ACAT1).